Reading from the N-terminus, the 248-residue chain is Ribonuclease PH (248 aa).

Residues R86 and G124 to R126 each bind phosphate.

It belongs to the RNase PH family. In terms of assembly, homohexameric ring arranged as a trimer of dimers.

It catalyses the reaction tRNA(n+1) + phosphate = tRNA(n) + a ribonucleoside 5'-diphosphate. Functionally, phosphorolytic 3'-5' exoribonuclease that plays an important role in tRNA 3'-end maturation. Removes nucleotide residues following the 3'-CCA terminus of tRNAs; can also add nucleotides to the ends of RNA molecules by using nucleoside diphosphates as substrates, but this may not be physiologically important. Probably plays a role in initiation of 16S rRNA degradation (leading to ribosome degradation) during starvation. This Listeria innocua serovar 6a (strain ATCC BAA-680 / CLIP 11262) protein is Ribonuclease PH.